The chain runs to 215 residues: Adenylate kinase (215 aa).

10-15 contacts ATP; that stretch reads GAGKGT. Residues 30–59 are NMP; sequence STGDMFRAAIKDQTPLGQEAKSYMDKGELV. Residues threonine 31, arginine 36, 57 to 59, 85 to 88, and glutamine 92 each bind AMP; these read ELV and GFPR. An LID region spans residues 126–163; the sequence is GRRICPTCGATYHVIYNPPKVEGVCDIDGSALVQREDD. Residue arginine 127 participates in ATP binding. Residues cysteine 130 and cysteine 133 each coordinate Zn(2+). 136–137 contributes to the ATP binding site; that stretch reads TY. Zn(2+) contacts are provided by cysteine 150 and aspartate 153. Positions 160 and 171 each coordinate AMP. Residue arginine 199 participates in ATP binding.

This sequence belongs to the adenylate kinase family. Monomer.

Its subcellular location is the cytoplasm. The enzyme catalyses AMP + ATP = 2 ADP. The protein operates within purine metabolism; AMP biosynthesis via salvage pathway; AMP from ADP: step 1/1. In terms of biological role, catalyzes the reversible transfer of the terminal phosphate group between ATP and AMP. Plays an important role in cellular energy homeostasis and in adenine nucleotide metabolism. The polypeptide is Adenylate kinase (Exiguobacterium sibiricum (strain DSM 17290 / CCUG 55495 / CIP 109462 / JCM 13490 / 255-15)).